The primary structure comprises 423 residues: Histidine--tRNA ligase (423 aa).

It belongs to the class-II aminoacyl-tRNA synthetase family. As to quaternary structure, homodimer.

The protein localises to the cytoplasm. It catalyses the reaction tRNA(His) + L-histidine + ATP = L-histidyl-tRNA(His) + AMP + diphosphate + H(+). The protein is Histidine--tRNA ligase of Laribacter hongkongensis (strain HLHK9).